The chain runs to 134 residues: Small ribosomal subunit protein uS9 (134 aa).

Residues 109–134 (KGDPRRKEPKKFGGRGARARRQKSYR) form a disordered region. Residues 115-134 (KEPKKFGGRGARARRQKSYR) are compositionally biased toward basic residues.

This sequence belongs to the universal ribosomal protein uS9 family.

The sequence is that of Small ribosomal subunit protein uS9 from Methanopyrus kandleri (strain AV19 / DSM 6324 / JCM 9639 / NBRC 100938).